The sequence spans 358 residues: Probable dual-specificity RNA methyltransferase RlmN 2 (358 aa).

The Proton acceptor role is filled by Glu90. The Radical SAM core domain occupies 96–328 (SGIRRTVCVS…VNTCRYTKGD (233 aa)). Cys103 and Cys334 are oxidised to a cystine. Cys110, Cys114, and Cys117 together coordinate [4Fe-4S] cluster. S-adenosyl-L-methionine-binding positions include 160-161 (GE), Ser192, 215-217 (SLH), and Asn291. Catalysis depends on Cys334, which acts as the S-methylcysteine intermediate.

This sequence belongs to the radical SAM superfamily. RlmN family. Requires [4Fe-4S] cluster as cofactor.

It localises to the cytoplasm. The catalysed reaction is adenosine(2503) in 23S rRNA + 2 reduced [2Fe-2S]-[ferredoxin] + 2 S-adenosyl-L-methionine = 2-methyladenosine(2503) in 23S rRNA + 5'-deoxyadenosine + L-methionine + 2 oxidized [2Fe-2S]-[ferredoxin] + S-adenosyl-L-homocysteine. It carries out the reaction adenosine(37) in tRNA + 2 reduced [2Fe-2S]-[ferredoxin] + 2 S-adenosyl-L-methionine = 2-methyladenosine(37) in tRNA + 5'-deoxyadenosine + L-methionine + 2 oxidized [2Fe-2S]-[ferredoxin] + S-adenosyl-L-homocysteine. Its function is as follows. Specifically methylates position 2 of adenine 2503 in 23S rRNA and position 2 of adenine 37 in tRNAs. The polypeptide is Probable dual-specificity RNA methyltransferase RlmN 2 (Protochlamydia amoebophila (strain UWE25)).